The chain runs to 43 residues: Protein PsbN (43 aa).

A helical transmembrane segment spans residues 5-27 (TLFAISISCLLVSFTGYALYTAF).

This sequence belongs to the PsbN family.

Its subcellular location is the plastid. It localises to the chloroplast thylakoid membrane. Functionally, may play a role in photosystem I and II biogenesis. The protein is Protein PsbN of Thuja plicata (Western red-cedar).